The chain runs to 573 residues: Protein DSE1 (573 aa).

WD repeat units lie at residues 144-185 (DFPP…GCAK), 315-351 (RKNT…GKPV), 356-395 (AKKG…NMKY), and 397-448 (ELVH…NGKG). Residues 500-509 (SDSSMLSLSN) are compositionally biased toward low complexity. The interval 500 to 519 (SDSSMLSLSNESDHSMTETS) is disordered. A Glycyl lysine isopeptide (Lys-Gly) (interchain with G-Cter in ubiquitin) cross-link involves residue lysine 553.

Belongs to the WD repeat DSE1 family.

The protein localises to the bud neck. Functionally, involved in cell wall metabolism and required for the separation of the mother and daughter cells. The protein is Protein DSE1 (DSE1) of Saccharomyces cerevisiae (strain ATCC 204508 / S288c) (Baker's yeast).